The primary structure comprises 607 residues: MVRVKQKNLESYRSNGTYPPTWRNPTTSFAPDQHRVSIHSSLKSKTKRRRLYKEADDNTKLRSSSSTTTTTTTMLLRISGNNLRPLRPQFLALRSSWLSTSPEQSTQPQMPPRVPNLIGGSFVESQSSSFIDVINPATQEVVSKVPLTTNEEFKAAVSAAKQAFPLWRNTPITTRQRVMLKFQELIRKNMDKLAMNITTEQGKTLKDSHGDIFRGLEVVEHACGMATLQMGEYLPNVSNGVDTYSIREPLGVCAGICPFNFPAMIPLWMFPVAVTCGNTFILKPSEKDPGASVILAELAMEAGLPDGVLNIVHGTNDTVNAICDDEDIRAVSFVGSNTAGMHIYARAAAKGKRIQSNMGAKNHGLVLPDANIDATLNALLAAGFGAAGQRCMALSTVVFVGDAKSWEDKLVERAKALKVTCGSEPDADLGPVISKQAKERICRLIQSGVDDGAKLLLDGRDIVVPGYEKGNFIGPTILSGVTPDMECYKEEIFGPVLVCMQANSFDEAISIINKNKYGNGAAIFTSSGAAARKFQMDIEAGQIGINVPIPVPLPFFSFTGNKASFAGDLNFYGKAGVDFFTQIKTVTQQWKDIPTSVSLAMPTSQKQ.

Residues 1 to 69 are disordered; that stretch reads MVRVKQKNLE…KLRSSSSTTT (69 aa). The transit peptide at 1–98 directs the protein to the mitochondrion; it reads MVRVKQKNLE…QFLALRSSWL (98 aa). The span at 9-30 shows a compositional bias: polar residues; that stretch reads LESYRSNGTYPPTWRNPTTSFA. Residues 42–51 are compositionally biased toward basic residues; sequence LKSKTKRRRL. Residues Phe-259, Lys-283, Glu-286, Lys-287, and Ser-336 each coordinate NAD(+). Cys-391 functions as the Nucleophile in the catalytic mechanism. Glu-491 contributes to the NAD(+) binding site.

The protein belongs to the aldehyde dehydrogenase family.

Its subcellular location is the mitochondrion. The enzyme catalyses 2-methyl-3-oxopropanoate + NAD(+) + CoA + H2O = propanoyl-CoA + hydrogencarbonate + NADH + H(+). In Arabidopsis thaliana (Mouse-ear cress), this protein is Methylmalonate-semialdehyde dehydrogenase [acylating], mitochondrial (ALDH6B2).